Here is a 124-residue protein sequence, read N- to C-terminus: Small ribosomal subunit protein uS12 (124 aa).

The residue at position 89 (Asp-89) is a 3-methylthioaspartic acid.

The protein belongs to the universal ribosomal protein uS12 family. Part of the 30S ribosomal subunit. Contacts proteins S8 and S17. May interact with IF1 in the 30S initiation complex.

In terms of biological role, with S4 and S5 plays an important role in translational accuracy. Functionally, interacts with and stabilizes bases of the 16S rRNA that are involved in tRNA selection in the A site and with the mRNA backbone. Located at the interface of the 30S and 50S subunits, it traverses the body of the 30S subunit contacting proteins on the other side and probably holding the rRNA structure together. The combined cluster of proteins S8, S12 and S17 appears to hold together the shoulder and platform of the 30S subunit. The chain is Small ribosomal subunit protein uS12 from Shewanella baltica (strain OS223).